A 494-amino-acid polypeptide reads, in one-letter code: Integrin beta-like protein 1 (494 aa).

The first 23 residues, 1–23 (MRPPGFRNFLLLASSLLFAGLSA), serve as a signal peptide directing secretion. 40 disulfide bridges follow: Cys-40-Cys-71, Cys-51-Cys-69, Cys-63-Cys-74, Cys-76-Cys-89, Cys-91-Cys-112, Cys-96-Cys-110, Cys-104-Cys-115, Cys-117-Cys-126, Cys-132-Cys-159, Cys-143-Cys-157, Cys-151-Cys-162, Cys-164-Cys-178, Cys-180-Cys-202, Cys-185-Cys-200, Cys-194-Cys-205, Cys-207-Cys-216, Cys-220-Cys-247, Cys-231-Cys-245, Cys-239-Cys-250, Cys-252-Cys-269, Cys-271-Cys-296, Cys-276-Cys-294, Cys-288-Cys-299, Cys-301-Cys-310, Cys-316-Cys-343, Cys-327-Cys-341, Cys-335-Cys-346, Cys-348-Cys-361, Cys-363-Cys-384, Cys-368-Cys-382, Cys-376-Cys-387, Cys-389-Cys-398, Cys-404-Cys-431, Cys-415-Cys-429, Cys-423-Cys-434, Cys-436-Cys-448, Cys-450-Cys-471, Cys-455-Cys-469, Cys-463-Cys-474, and Cys-476-Cys-485. 10 consecutive I-EGF domains span residues 40–90 (CRLS…PLCE), 91–127 (CHEW…DACQ), 132–179 (CDLT…KFCE), 180–217 (CDDR…DKCE), 220–270 (CDIT…DTCE), 271–311 (CDER…KKCE), 316–362 (CTLS…KTCE), 363–399 (CDDR…KLCQ), 404–449 (CNMT…EFCD), and 450–486 (CDDR…NACE). Residues 51–95 (CRAPGQPPGAALCHGRGRCDCGVCICHVTEPGMFFGPLCECHEWV) form an I repeat. Residues 51–494 (CRAPGQPPGA…CEIWLGSEYP (444 aa)) form a cysteine-rich tandem repeats region. An II repeat occupies 96–142 (CETYDGSTCAGHGKCDCGKCKCDQGWYGDACQYPTNCDLTKKKSNQM). The III repeat unit spans residues 143-184 (CKNSQDIICSNAGTCHCGRCKCDNSDGSGLVYGKFCECDDRE). The IV repeat unit spans residues 185–230 (CIDDETEEICGGHGKCYCGNCYCKAGWHGDKCEFQCDITPWESKRR). One copy of the V repeat lies at 231-275 (CTSPDGKICSNRGTCVCGECTCHDVDPTGDWGDIHGDTCECDERD). Residues 276–326 (CRAVYDRYSDDFCSGHGQCNCGRCDCKAGWYGKKCEHPQSCTLSAEESIRK) form a VI repeat. Residues 327 to 367 (CQGSSDLPCSGRGKCECGKCTCYPPGDRRVYGKTCECDDRR) form a VII repeat. Residues 368 to 414 (CEDLDGVVCGGHGTCSCGRCVCERGWFGKLCQHPRKCNMTEEQSKNL) form a VIII repeat. Asn-405 carries an N-linked (GlcNAc...) asparagine glycan. Residues 415–454 (CESADGILCSGKGSCHCGKCICSAEEWYISGEFCDCDDRD) form an IX repeat. A X repeat occupies 455 to 494 (CDKHDGLICTGNGICSCGNCECWDGWNGNACEIWLGSEYP).

As to expression, widely expressed in many tissues, but readily detectable only in aorta.

It localises to the secreted. In Homo sapiens (Human), this protein is Integrin beta-like protein 1 (ITGBL1).